The primary structure comprises 341 residues: Aromatic amino acid aminotransferase (341 aa).

Lysine 213 carries the N6-(pyridoxal phosphate)lysine modification.

The protein belongs to the class-II pyridoxal-phosphate-dependent aminotransferase family. Homodimer. Pyridoxal 5'-phosphate serves as cofactor.

It carries out the reaction an aromatic L-alpha-amino acid + 2-oxoglutarate = an aromatic oxo-acid + L-glutamate. Its function is as follows. Aminotransferase that catalyzes the conversion of aromatic amino acids and 2-oxoglutarate into corresponding aromatic oxo acids and L-glutamate. The polypeptide is Aromatic amino acid aminotransferase (Corynebacterium glutamicum (strain R)).